The primary structure comprises 231 residues: MKRAVVVFSGGQDSTTCLVQALQQYDEVHCVTFDYGQRHRAEIDVARELALKLGARAHKVLDVTLLNELAVSSLTRDSIPVPDYEPEADGIPNTFVPGRNILFLTLAAIYAYQVKAEAVITGVCETDFSGYPDCRDEFVKALNHAVSLGMAKHIRFETPLMWIDKAETWALADYYGKLDLVRNETLTCYNGIKGDGCGHCAACNLRANGLNHYLADKPTVMAAMKQKTGLK.

Phe-8–Leu-18 provides a ligand contact to ATP. Zn(2+)-binding residues include Cys-188, Cys-197, Cys-200, and Cys-203.

Belongs to the QueC family. The cofactor is Zn(2+).

The catalysed reaction is 7-carboxy-7-deazaguanine + NH4(+) + ATP = 7-cyano-7-deazaguanine + ADP + phosphate + H2O + H(+). The protein operates within purine metabolism; 7-cyano-7-deazaguanine biosynthesis. In terms of biological role, catalyzes the ATP-dependent conversion of 7-carboxy-7-deazaguanine (CDG) to 7-cyano-7-deazaguanine (preQ(0)). This chain is 7-cyano-7-deazaguanine synthase, found in Shigella dysenteriae serotype 1 (strain Sd197).